A 350-amino-acid polypeptide reads, in one-letter code: ATPase GET3 (350 aa).

26 to 33 (KGGVGKTT) contacts ATP. Aspartate 57 is a catalytic residue. Glutamate 243 and asparagine 270 together coordinate ATP. Residues cysteine 282 and cysteine 285 each coordinate Zn(2+).

This sequence belongs to the arsA ATPase family. Homodimer. Component of the Golgi to ER traffic (GET) complex, which is composed of GET1, GET2 and GET3. Within the complex, GET1 and GET2 form a heterotetramer which is stabilized by phosphatidylinositol binding and which binds to the GET3 homodimer. Interacts with the chloride channel protein GEF1.

Its subcellular location is the cytoplasm. The protein resides in the endoplasmic reticulum. It localises to the golgi apparatus. In terms of biological role, ATPase required for the post-translational delivery of tail-anchored (TA) proteins to the endoplasmic reticulum. Recognizes and selectively binds the transmembrane domain of TA proteins in the cytosol. This complex then targets to the endoplasmic reticulum by membrane-bound receptors GET1 and GET2, where the tail-anchored protein is released for insertion. This process is regulated by ATP binding and hydrolysis. ATP binding drives the homodimer towards the closed dimer state, facilitating recognition of newly synthesized TA membrane proteins. ATP hydrolysis is required for insertion. Subsequently, the homodimer reverts towards the open dimer state, lowering its affinity for the GET1-GET2 receptor, and returning it to the cytosol to initiate a new round of targeting. Cooperates with the HDEL receptor ERD2 to mediate the ATP-dependent retrieval of resident ER proteins that contain a C-terminal H-D-E-L retention signal from the Golgi to the ER. Involved in low-level resistance to the oxyanions arsenite and arsenate, and in heat tolerance. This Candida dubliniensis (strain CD36 / ATCC MYA-646 / CBS 7987 / NCPF 3949 / NRRL Y-17841) (Yeast) protein is ATPase GET3.